We begin with the raw amino-acid sequence, 264 residues long: Thymidylate synthase (264 aa).

Arginine 21 provides a ligand contact to dUMP. Residue histidine 51 participates in (6R)-5,10-methylene-5,6,7,8-tetrahydrofolate binding. Arginine 126–arginine 127 contributes to the dUMP binding site. Cysteine 146 (nucleophile) is an active-site residue. Residues arginine 166–aspartate 169, asparagine 177, and histidine 207–tyrosine 209 each bind dUMP. Residue aspartate 169 participates in (6R)-5,10-methylene-5,6,7,8-tetrahydrofolate binding. Alanine 263 lines the (6R)-5,10-methylene-5,6,7,8-tetrahydrofolate pocket.

The protein belongs to the thymidylate synthase family. Bacterial-type ThyA subfamily. In terms of assembly, homodimer.

The protein resides in the cytoplasm. The catalysed reaction is dUMP + (6R)-5,10-methylene-5,6,7,8-tetrahydrofolate = 7,8-dihydrofolate + dTMP. The protein operates within pyrimidine metabolism; dTTP biosynthesis. Functionally, catalyzes the reductive methylation of 2'-deoxyuridine-5'-monophosphate (dUMP) to 2'-deoxythymidine-5'-monophosphate (dTMP) while utilizing 5,10-methylenetetrahydrofolate (mTHF) as the methyl donor and reductant in the reaction, yielding dihydrofolate (DHF) as a by-product. This enzymatic reaction provides an intracellular de novo source of dTMP, an essential precursor for DNA biosynthesis. This is Thymidylate synthase from Azotobacter vinelandii (strain DJ / ATCC BAA-1303).